The chain runs to 388 residues: Succinate--CoA ligase [ADP-forming] subunit beta (388 aa).

One can recognise an ATP-grasp domain in the interval 9-244 (KQLFAEYGLP…PSQDDPREAH (236 aa)). ATP contacts are provided by residues Lys-46, 53–55 (GRG), Glu-99, Thr-102, and Glu-107. 2 residues coordinate Mg(2+): Asn-199 and Asp-213. Residues Asn-264 and 321 to 323 (GIV) each bind substrate.

This sequence belongs to the succinate/malate CoA ligase beta subunit family. As to quaternary structure, heterotetramer of two alpha and two beta subunits. It depends on Mg(2+) as a cofactor.

The enzyme catalyses succinate + ATP + CoA = succinyl-CoA + ADP + phosphate. The catalysed reaction is GTP + succinate + CoA = succinyl-CoA + GDP + phosphate. The protein operates within carbohydrate metabolism; tricarboxylic acid cycle; succinate from succinyl-CoA (ligase route): step 1/1. Its function is as follows. Succinyl-CoA synthetase functions in the citric acid cycle (TCA), coupling the hydrolysis of succinyl-CoA to the synthesis of either ATP or GTP and thus represents the only step of substrate-level phosphorylation in the TCA. The beta subunit provides nucleotide specificity of the enzyme and binds the substrate succinate, while the binding sites for coenzyme A and phosphate are found in the alpha subunit. The polypeptide is Succinate--CoA ligase [ADP-forming] subunit beta (Aeromonas hydrophila subsp. hydrophila (strain ATCC 7966 / DSM 30187 / BCRC 13018 / CCUG 14551 / JCM 1027 / KCTC 2358 / NCIMB 9240 / NCTC 8049)).